Here is a 495-residue protein sequence, read N- to C-terminus: Prenylcysteine oxidase 1-like (495 aa).

The first 22 residues, 1 to 22 (MARAAPLLAVLATVLTTAAAGG), serve as a signal peptide directing secretion. N-linked (GlcNAc...) asparagine glycans are attached at residues Asn-185 and Asn-343.

It belongs to the prenylcysteine oxidase family. FAD serves as cofactor.

It localises to the secreted. Functionally, likely to have oxidoreductase activity. Required in the mevalonate pathway to regulate prenylation and enhances the bactericidal activity of neutrophils. This chain is Prenylcysteine oxidase 1-like (Pcyox1l), found in Mus musculus (Mouse).